A 256-amino-acid polypeptide reads, in one-letter code: Omega-amidase YafV (256 aa).

A CN hydrolase domain is found at 4-234 (LKITLLQQPL…ATRIDAELSM (231 aa)). The Proton acceptor role is filled by Glu-42. Residue Lys-107 is the Proton donor of the active site. Cys-141 (nucleophile) is an active-site residue.

The protein belongs to the carbon-nitrogen hydrolase superfamily. NIT1/NIT2 family.

It carries out the reaction a monoamide of a dicarboxylate + H2O = a dicarboxylate + NH4(+). In terms of biological role, hydrolyzes alpha-ketoglutaramate (a-KGM) to alpha-ketoglutarate (alpha-KG) and ammonia, has weak activity on L-glutamine, almost no activity on deaminated glutathione (dGSH) and none on glutathione. May function as a metabolite repair enzyme. This Escherichia coli (strain K12) protein is Omega-amidase YafV (yafV).